A 393-amino-acid polypeptide reads, in one-letter code: Acetyl-CoA acetyltransferase (393 aa).

Catalysis depends on Cys-88, which acts as the Acyl-thioester intermediate. Residues His-349 and Cys-379 each act as proton acceptor in the active site.

This sequence belongs to the thiolase-like superfamily. Thiolase family.

It is found in the cytoplasm. The catalysed reaction is 2 acetyl-CoA = acetoacetyl-CoA + CoA. The protein operates within metabolic intermediate biosynthesis; (R)-mevalonate biosynthesis; (R)-mevalonate from acetyl-CoA: step 1/3. The sequence is that of Acetyl-CoA acetyltransferase (atoB) from Pseudomonas aeruginosa (strain ATCC 15692 / DSM 22644 / CIP 104116 / JCM 14847 / LMG 12228 / 1C / PRS 101 / PAO1).